The sequence spans 295 residues: Pantothenate synthetase (295 aa).

An ATP-binding site is contributed by 29 to 36 (MGALHSGH). The Proton donor role is filled by His36. Gln60 lines the (R)-pantoate pocket. Gln60 contributes to the beta-alanine binding site. 158–161 (GQKD) lines the ATP pocket. Gln164 is a (R)-pantoate binding site. ATP is bound by residues Val187 and 195–198 (LSSR).

The protein belongs to the pantothenate synthetase family. In terms of assembly, homodimer.

Its subcellular location is the cytoplasm. The enzyme catalyses (R)-pantoate + beta-alanine + ATP = (R)-pantothenate + AMP + diphosphate + H(+). The protein operates within cofactor biosynthesis; (R)-pantothenate biosynthesis; (R)-pantothenate from (R)-pantoate and beta-alanine: step 1/1. Functionally, catalyzes the condensation of pantoate with beta-alanine in an ATP-dependent reaction via a pantoyl-adenylate intermediate. The chain is Pantothenate synthetase from Paenarthrobacter aurescens (strain TC1).